The chain runs to 473 residues: Photosystem II CP43 reaction center protein (473 aa).

Residues 1-14 (MKTLYSPRRFYPVE) constitute a propeptide that is removed on maturation. Residue T15 is modified to N-acetylthreonine. T15 is modified (phosphothreonine). 5 consecutive transmembrane segments (helical) span residues 69–93 (LFEV…PHLA), 134–155 (LLGP…KDRN), 178–200 (KALY…RKIS), 255–275 (KPFA…LSYS), and 291–312 (WFNN…ASQA). E367 is a binding site for [CaMn4O5] cluster. The chain crosses the membrane as a helical span at residues 447-471 (RARAAAAGFEKGIDRDLEPVLFMTP).

Belongs to the PsbB/PsbC family. PsbC subfamily. PSII is composed of 1 copy each of membrane proteins PsbA, PsbB, PsbC, PsbD, PsbE, PsbF, PsbH, PsbI, PsbJ, PsbK, PsbL, PsbM, PsbT, PsbX, PsbY, PsbZ, Psb30/Ycf12, at least 3 peripheral proteins of the oxygen-evolving complex and a large number of cofactors. It forms dimeric complexes. The cofactor is Binds multiple chlorophylls and provides some of the ligands for the Ca-4Mn-5O cluster of the oxygen-evolving complex. It may also provide a ligand for a Cl- that is required for oxygen evolution. PSII binds additional chlorophylls, carotenoids and specific lipids..

Its subcellular location is the plastid. It is found in the chloroplast thylakoid membrane. In terms of biological role, one of the components of the core complex of photosystem II (PSII). It binds chlorophyll and helps catalyze the primary light-induced photochemical processes of PSII. PSII is a light-driven water:plastoquinone oxidoreductase, using light energy to abstract electrons from H(2)O, generating O(2) and a proton gradient subsequently used for ATP formation. The chain is Photosystem II CP43 reaction center protein from Ranunculus macranthus (Large buttercup).